Consider the following 436-residue polypeptide: GTPase Der (436 aa).

EngA-type G domains lie at proline 4 to glutamate 167 and isoleucine 176 to asparagine 351. Residues glycine 10–serine 17, aspartate 57–isoleucine 61, asparagine 119–aspartate 122, glycine 182–serine 189, aspartate 229–methionine 233, and asparagine 294–aspartate 297 each bind GTP. Residues isoleucine 352–aspartate 436 form the KH-like domain.

It belongs to the TRAFAC class TrmE-Era-EngA-EngB-Septin-like GTPase superfamily. EngA (Der) GTPase family. In terms of assembly, associates with the 50S ribosomal subunit.

Its function is as follows. GTPase that plays an essential role in the late steps of ribosome biogenesis. The chain is GTPase Der from Bacillus cytotoxicus (strain DSM 22905 / CIP 110041 / 391-98 / NVH 391-98).